A 490-amino-acid chain; its full sequence is Tektin-3 (490 aa).

O-linked (GalNAc...) threonine glycans are attached at residues T7, T9, and T10. 6 N-linked (GlcNAc...) asparagine glycosylation sites follow: N41, N86, N103, N111, N276, and N344. A coiled-coil region spans residues 424 to 451 (VHEVDDTIQTLQQRLRDAEDTLQSLVHI).

The protein belongs to the tektin family. In terms of assembly, microtubule inner protein component of sperm flagellar doublet microtubules. Interacts with TEKT1, TEKT2, TEKT4 and TEKT5. Interacts with CCDC38. In terms of processing, N- and O-glycosylated. May be proteolytically processed during the epididymal transit of spermatozoa. Post-translationally, ubiquitinated, leading to its degradation. Deubiquitinated by USP16, promoting its stability. Expressed in spermatozoa. Expressed in airway epithelial cells.

It localises to the cytoplasm. The protein localises to the cytoskeleton. The protein resides in the cilium axoneme. Its subcellular location is the flagellum axoneme. It is found in the cytoplasmic vesicle. It localises to the secretory vesicle. The protein localises to the acrosome outer membrane. Its function is as follows. Microtubule inner protein (MIP) part of the dynein-decorated doublet microtubules (DMTs) in cilia and flagellar axoneme. Forms filamentous polymers in the walls of ciliary and flagellar microtubules. Required for normal sperm mobility. This chain is Tektin-3 (TEKT3), found in Homo sapiens (Human).